The primary structure comprises 386 residues: EARP and GARP complex-interacting protein 1 (386 aa).

N-acetylmethionine is present on M1. 4 WD repeats span residues 132–172 (GAQG…SQAV), 182–222 (RGQL…QIYC), 226–266 (AHGQ…EPVK), and 270–310 (EHSH…SEPF). Residues 312-332 (HLVDDDDVSDPEEHHTEKSKE) are disordered. S320 is modified (phosphoserine). Basic and acidic residues predominate over residues 322-332 (PEEHHTEKSKE). Residues 344-384 (EHEDSVYAVDWASADPWLFASLSYDGRLVINRVPRALKYHI) form a WD 5 repeat.

This sequence belongs to the WD repeat EIPR1 family. Interacts with two multisubunit tethering complexes: EARP composed of VPS50, VPS51, VPS52 and VPS53 subunits and GARP complex composed of VPS51, VPS52, VPS53 and VPS54 subunits. Interacts with SNAP29. As to expression, ubiquitous. Highly expressed in brain, adipose tissue, spleen and kidney (at protein level).

The protein resides in the golgi apparatus. Its subcellular location is the trans-Golgi network. Functionally, acts as a component of endosomal retrieval machinery that is involved in protein transport from early endosomes to either recycling endosomes or the trans-Golgi network. Mediates the recruitment of Golgi-associated retrograde protein (GARP) complex to the trans-Golgi network and controls early endosome-to-Golgi transport of internalized protein. Promotes the recycling of internalized transferrin receptor (TFRC) to the plasma membrane through interaction with endosome-associated recycling protein (EARP) complex. Controls proper insulin distribution and secretion, and retention of cargo in mature dense core vesicles. Required for the stability of the endosome-associated retrograde protein (EARP) complex subunits and for proper localization and association of EARP with membranes. The sequence is that of EARP and GARP complex-interacting protein 1 from Rattus norvegicus (Rat).